The primary structure comprises 416 residues: CCA-adding enzyme (416 aa).

2 residues coordinate ATP: Ser-42 and Lys-45. CTP contacts are provided by Ser-42 and Lys-45. 3 residues coordinate Mg(2+): Asp-54, Asp-56, and Asp-107. The ATP site is built by His-130, Lys-150, and Tyr-159. CTP contacts are provided by His-130, Lys-150, and Tyr-159.

This sequence belongs to the tRNA nucleotidyltransferase/poly(A) polymerase family. Archaeal CCA-adding enzyme subfamily. As to quaternary structure, homodimer. Requires Mg(2+) as cofactor.

It catalyses the reaction a tRNA precursor + 2 CTP + ATP = a tRNA with a 3' CCA end + 3 diphosphate. The enzyme catalyses a tRNA with a 3' CCA end + 2 CTP + ATP = a tRNA with a 3' CCACCA end + 3 diphosphate. In terms of biological role, catalyzes the addition and repair of the essential 3'-terminal CCA sequence in tRNAs without using a nucleic acid template. Adds these three nucleotides in the order of C, C, and A to the tRNA nucleotide-73, using CTP and ATP as substrates and producing inorganic pyrophosphate. tRNA 3'-terminal CCA addition is required both for tRNA processing and repair. Also involved in tRNA surveillance by mediating tandem CCA addition to generate a CCACCA at the 3' terminus of unstable tRNAs. While stable tRNAs receive only 3'-terminal CCA, unstable tRNAs are marked with CCACCA and rapidly degraded. The polypeptide is CCA-adding enzyme (Sulfolobus acidocaldarius (strain ATCC 33909 / DSM 639 / JCM 8929 / NBRC 15157 / NCIMB 11770)).